The sequence spans 560 residues: DNA ligase B (560 aa).

The N6-AMP-lysine intermediate role is filled by Lys-128.

It belongs to the NAD-dependent DNA ligase family. LigB subfamily.

The enzyme catalyses NAD(+) + (deoxyribonucleotide)n-3'-hydroxyl + 5'-phospho-(deoxyribonucleotide)m = (deoxyribonucleotide)n+m + AMP + beta-nicotinamide D-nucleotide.. Its function is as follows. Catalyzes the formation of phosphodiester linkages between 5'-phosphoryl and 3'-hydroxyl groups in double-stranded DNA using NAD as a coenzyme and as the energy source for the reaction. The sequence is that of DNA ligase B from Azotobacter vinelandii (strain DJ / ATCC BAA-1303).